A 185-amino-acid chain; its full sequence is Ribosome-recycling factor (185 aa).

This sequence belongs to the RRF family.

It localises to the cytoplasm. Functionally, responsible for the release of ribosomes from messenger RNA at the termination of protein biosynthesis. May increase the efficiency of translation by recycling ribosomes from one round of translation to another. The polypeptide is Ribosome-recycling factor (Bacillus pumilus (strain SAFR-032)).